A 167-amino-acid chain; its full sequence is uncharacterized protein (167 aa).

Residues 4-24 (IIGLFFIIILIVINISILAYD) traverse the membrane as a helical segment.

Its subcellular location is the membrane. This is an uncharacterized protein from Rickettsia prowazekii (strain Madrid E).